Reading from the N-terminus, the 129-residue chain is Small ribosomal subunit protein uS11 (129 aa).

The protein belongs to the universal ribosomal protein uS11 family. In terms of assembly, part of the 30S ribosomal subunit. Interacts with proteins S7 and S18. Binds to IF-3.

Its function is as follows. Located on the platform of the 30S subunit, it bridges several disparate RNA helices of the 16S rRNA. Forms part of the Shine-Dalgarno cleft in the 70S ribosome. This is Small ribosomal subunit protein uS11 from Bartonella henselae (strain ATCC 49882 / DSM 28221 / CCUG 30454 / Houston 1) (Rochalimaea henselae).